The following is a 391-amino-acid chain: Phosphoglycerate kinase (391 aa).

Residues 21–23 (DLN), Arg-36, 59–62 (HLGR), Arg-113, and Arg-146 each bind substrate. ATP-binding positions include Lys-197, Glu-319, and 345-348 (GGDT).

This sequence belongs to the phosphoglycerate kinase family. Monomer.

It localises to the cytoplasm. It catalyses the reaction (2R)-3-phosphoglycerate + ATP = (2R)-3-phospho-glyceroyl phosphate + ADP. The protein operates within carbohydrate degradation; glycolysis; pyruvate from D-glyceraldehyde 3-phosphate: step 2/5. The polypeptide is Phosphoglycerate kinase (Shewanella sp. (strain ANA-3)).